The sequence spans 251 residues: L-ascorbate peroxidase 2, cytosolic (251 aa).

The active-site Proton acceptor is histidine 43. The segment at 113–137 is disordered; the sequence is EVPFHPGRQDKPEPPPEGRLPDATQ. Basic and acidic residues predominate over residues 119–132; sequence GRQDKPEPPPEGRL. Histidine 164 contacts heme b. 5 residues coordinate K(+): threonine 165, threonine 181, asparagine 183, isoleucine 186, and aspartate 188.

It belongs to the peroxidase family. Ascorbate peroxidase subfamily. Heme b is required as a cofactor. Expressed in aerial vegetative parts and reproductive organs. Expressed in roots, leaves, stems and flowers. Expressed in young leaves, internodes, blade ears, stems and anthers.

The protein localises to the cytoplasm. It catalyses the reaction L-ascorbate + H2O2 = L-dehydroascorbate + 2 H2O. With respect to regulation, inhibited by p-chloromercuriphenylsulfonic acid (CMPSA). Functionally, plays a key role in hydrogen peroxide removal. Plays an important role in plant growth and development by protecting the seedlings from abiotic stresses through scavenging reactive oxygen species. Required for pollen viability. This is L-ascorbate peroxidase 2, cytosolic from Oryza sativa subsp. japonica (Rice).